Reading from the N-terminus, the 63-residue chain is Large ribosomal subunit protein bL32 (63 aa).

It belongs to the bacterial ribosomal protein bL32 family.

In Aquifex aeolicus (strain VF5), this protein is Large ribosomal subunit protein bL32 (rpmF).